We begin with the raw amino-acid sequence, 335 residues long: MNLDDLLNSALDELETQEKEQPTTTKTTTTTTTTTTSNTTKTINNNNNTVTPSTIKPTYNKPPPPSLGNDDLLNTNVNDMMDIFKKLLGEETLKNLDAGFDKEYNKDINNNSDDSNNGGLPSEEDKKKIDELAEKLATMFGVSEDSDLGDMDNFKPFLEELTKAGGLNFNNDELNNNSNNNNKNNNNSGVHIDNFESSISDTLKNLADNASNKTDNNGGIDDLFSNLSKLMEGQNFNLDGEETGQINDLFEESIQFMAENYPDWIEKNIDHYPPEETERFKNQSEIFSMIAQQKEGEADMLDSGLLARMSQLGNLPDSFCEDSIKKVETEIDEKE.

2 disordered regions span residues Leu14–Asp70 and Tyr104–Glu124. 2 stretches are compositionally biased toward low complexity: residues Pro22–Ile55 and Asn109–Gly119.

This sequence belongs to the peroxin-19 family.

The protein resides in the peroxisome. This is Putative peroxisomal biogenesis factor 19 (pex19) from Dictyostelium discoideum (Social amoeba).